The sequence spans 410 residues: Protein disulfide isomerase CRELD1 (410 aa).

The signal sequence occupies residues 1 to 29 (MGMSRRMFLTVYGSLWLLLLLSRPGVSKP). Topologically, residues 30–352 (QLCQTCQNLV…GLFDDITDDE (323 aa)) are extracellular. Positions 32 to 35 (CQTC) match the CXXC motif. 4 cysteine pairs are disulfide-bonded: Cys-32-Cys-35, Cys-141-Cys-155, Cys-149-Cys-167, and Cys-169-Cys-178. Residues 139 to 179 (LSCPGGTEKPCSGNGQCNGDGTRFGTGVCDCYTSYGGPVCM) form the EGF-like 1 domain. FU repeat units lie at residues 194–243 (HLVC…DHCK) and 254–301 (SYEC…ELPK). The short motif at 264-267 (CIGC) is the CXXC element. Disulfide bonds link Cys-264–Cys-267, Cys-295–Cys-309, Cys-302–Cys-318, and Cys-320–Cys-331. One can recognise an EGF-like 2; calcium-binding domain in the interval 291 to 332 (DVDECDSELPKCKGSHEECVNTEGSFTCVCEKDYSRIDGMCR). A helical membrane pass occupies residues 353–373 (VVVLQQMFFGVVICALATLAA). Position 374 (Lys-374) is a topological domain, cytoplasmic. A helical transmembrane segment spans residues 375–395 (GDMVFTAIFIGAVAAMAGYWL). The Extracellular portion of the chain corresponds to 396–410 (SEKGDRALDSFMKGR).

Belongs to the CRELD family.

It localises to the membrane. It catalyses the reaction Catalyzes the rearrangement of -S-S- bonds in proteins.. In terms of biological role, protein disulfide isomerase. Promotes the localization of acetylcholine receptors (AChRs) to the plasma membrane. This is Protein disulfide isomerase CRELD1 (creld1) from Xenopus tropicalis (Western clawed frog).